The primary structure comprises 226 residues: Protein AhpA (226 aa).

2 consecutive transmembrane segments (helical) span residues 12–32 and 169–189; these read SMIS…LFGV and GELI…HYFL.

The protein belongs to the Smp family.

The protein resides in the cell inner membrane. In terms of biological role, when anaerobically expressed in wild-type E.coli K12 confers a hemolytic phenotype, but not in an sheA mutant. Suggests it affects the expression of the latent E.coli K12 hemolysin sheA under anaerobic conditions. This is Protein AhpA (ahpA) from Pasteurella multocida (strain Pm70).